The primary structure comprises 101 residues: Large ribosomal subunit protein uL23 (101 aa).

This sequence belongs to the universal ribosomal protein uL23 family. As to quaternary structure, part of the 50S ribosomal subunit. Contacts protein L29, and trigger factor when it is bound to the ribosome.

Functionally, one of the early assembly proteins it binds 23S rRNA. One of the proteins that surrounds the polypeptide exit tunnel on the outside of the ribosome. Forms the main docking site for trigger factor binding to the ribosome. This chain is Large ribosomal subunit protein uL23, found in Synechocystis sp. (strain ATCC 27184 / PCC 6803 / Kazusa).